The primary structure comprises 216 residues: Probable GTP-binding protein EngB (216 aa).

One can recognise an EngB-type G domain in the interval 43–216; it reads DRLEVCFAGR…TLRSIITDLT (174 aa). Residues 51–58, 78–82, 96–99, 163–166, and 197–199 contribute to the GTP site; these read GRSNVGKS, GRTQE, DLPG, TKAD, and TSS. Residues Ser58 and Thr80 each coordinate Mg(2+).

The protein belongs to the TRAFAC class TrmE-Era-EngA-EngB-Septin-like GTPase superfamily. EngB GTPase family. Mg(2+) is required as a cofactor.

Necessary for normal cell division and for the maintenance of normal septation. The polypeptide is Probable GTP-binding protein EngB (Roseobacter denitrificans (strain ATCC 33942 / OCh 114) (Erythrobacter sp. (strain OCh 114))).